A 195-amino-acid polypeptide reads, in one-letter code: Rho-related protein racB (195 aa).

GTP is bound at residue 10–17 (GDGAVGKT). An Effector region motif is present at residues 32-40 (YVPTVFDNY). Residues 57–61 (DTAGQ) and 115–118 (TKCD) contribute to the GTP site. Residue Cys192 is modified to Cysteine methyl ester. Cys192 carries the S-geranylgeranyl cysteine lipid modification. A propeptide spans 193 to 195 (SIL) (removed in mature form).

It belongs to the small GTPase superfamily. Rho family. As to quaternary structure, interacts with pakB.

The protein localises to the cell membrane. In Dictyostelium discoideum (Social amoeba), this protein is Rho-related protein racB (racB).